Here is an 84-residue protein sequence, read N- to C-terminus: RNA-binding protein Hfq (84 aa).

The region spanning 11–71 (DTFLNFVRKN…ISTIMPGAPI (61 aa)) is the Sm domain.

It belongs to the Hfq family. As to quaternary structure, homohexamer.

RNA chaperone that binds small regulatory RNA (sRNAs) and mRNAs to facilitate mRNA translational regulation in response to envelope stress, environmental stress and changes in metabolite concentrations. Also binds with high specificity to tRNAs. The polypeptide is RNA-binding protein Hfq (Beijerinckia indica subsp. indica (strain ATCC 9039 / DSM 1715 / NCIMB 8712)).